Reading from the N-terminus, the 270-residue chain is tRNA pseudouridine synthase A (270 aa).

Residue D54 is the Nucleophile of the active site. Y112 provides a ligand contact to substrate.

It belongs to the tRNA pseudouridine synthase TruA family. Homodimer.

The enzyme catalyses uridine(38/39/40) in tRNA = pseudouridine(38/39/40) in tRNA. Its function is as follows. Formation of pseudouridine at positions 38, 39 and 40 in the anticodon stem and loop of transfer RNAs. The chain is tRNA pseudouridine synthase A from Bordetella bronchiseptica (strain ATCC BAA-588 / NCTC 13252 / RB50) (Alcaligenes bronchisepticus).